The sequence spans 252 residues: Pyridoxine 5'-phosphate synthase (252 aa).

Asn-7 serves as a coordination point for 3-amino-2-oxopropyl phosphate. 1-deoxy-D-xylulose 5-phosphate is bound at residue 9–10 (DH). Residue Arg-18 participates in 3-amino-2-oxopropyl phosphate binding. His-43 (proton acceptor) is an active-site residue. Arg-45 and His-50 together coordinate 1-deoxy-D-xylulose 5-phosphate. Glu-70 serves as the catalytic Proton acceptor. Thr-100 contacts 1-deoxy-D-xylulose 5-phosphate. The active-site Proton donor is His-190. Residues Gly-191 and 212 to 213 (GH) each bind 3-amino-2-oxopropyl phosphate.

Belongs to the PNP synthase family. As to quaternary structure, homooctamer; tetramer of dimers.

The protein localises to the cytoplasm. The catalysed reaction is 3-amino-2-oxopropyl phosphate + 1-deoxy-D-xylulose 5-phosphate = pyridoxine 5'-phosphate + phosphate + 2 H2O + H(+). The protein operates within cofactor biosynthesis; pyridoxine 5'-phosphate biosynthesis; pyridoxine 5'-phosphate from D-erythrose 4-phosphate: step 5/5. Functionally, catalyzes the complicated ring closure reaction between the two acyclic compounds 1-deoxy-D-xylulose-5-phosphate (DXP) and 3-amino-2-oxopropyl phosphate (1-amino-acetone-3-phosphate or AAP) to form pyridoxine 5'-phosphate (PNP) and inorganic phosphate. The polypeptide is Pyridoxine 5'-phosphate synthase (Synechococcus sp. (strain RCC307)).